We begin with the raw amino-acid sequence, 499 residues long: Glutamate--tRNA ligase (499 aa).

The 'HIGH' region motif lies at P12 to N22. The 'KMSKS' region motif lies at K259–R263. K262 provides a ligand contact to ATP.

This sequence belongs to the class-I aminoacyl-tRNA synthetase family. Glutamate--tRNA ligase type 1 subfamily. As to quaternary structure, monomer.

Its subcellular location is the cytoplasm. The enzyme catalyses tRNA(Glu) + L-glutamate + ATP = L-glutamyl-tRNA(Glu) + AMP + diphosphate. In terms of biological role, catalyzes the attachment of glutamate to tRNA(Glu) in a two-step reaction: glutamate is first activated by ATP to form Glu-AMP and then transferred to the acceptor end of tRNA(Glu). The protein is Glutamate--tRNA ligase of Lactobacillus johnsonii (strain CNCM I-12250 / La1 / NCC 533).